Consider the following 207-residue polypeptide: Dephospho-CoA kinase (207 aa).

Residues 5–202 (VVGLTGGIGS…LQYLKLSAEK (198 aa)) enclose the DPCK domain. 13-18 (GSGKST) provides a ligand contact to ATP.

This sequence belongs to the CoaE family.

The protein resides in the cytoplasm. It carries out the reaction 3'-dephospho-CoA + ATP = ADP + CoA + H(+). It participates in cofactor biosynthesis; coenzyme A biosynthesis; CoA from (R)-pantothenate: step 5/5. Its function is as follows. Catalyzes the phosphorylation of the 3'-hydroxyl group of dephosphocoenzyme A to form coenzyme A. The chain is Dephospho-CoA kinase from Dechloromonas aromatica (strain RCB).